Reading from the N-terminus, the 474-residue chain is Replication-associated protein (474 aa).

Residues 248-255 (GKRFQEDR) carry the Nuclear localization signal motif. Positions 455–474 (AFAPGFSLTSEPEPKRRRFF) are disordered.

It localises to the host nucleus. Plays an essential for the replication of viral DNA. Presumably cleaves viral genomic dsRNA replicative form to initiate rolling circle replication. The protein is Replication-associated protein of Avon-Heathcote Estuary associated kieseladnavirus (AHEaBV).